The following is an 85-amino-acid chain: Large ribosomal subunit protein bL27 (85 aa).

A disordered region spans residues 1–20 (MAHKKAGGSTRNGRDSESKR).

This sequence belongs to the bacterial ribosomal protein bL27 family.

This Yersinia enterocolitica serotype O:8 / biotype 1B (strain NCTC 13174 / 8081) protein is Large ribosomal subunit protein bL27.